A 149-amino-acid chain; its full sequence is UPF0310 protein SSO2595 (149 aa).

Belongs to the UPF0310 family.

This chain is UPF0310 protein SSO2595, found in Saccharolobus solfataricus (strain ATCC 35092 / DSM 1617 / JCM 11322 / P2) (Sulfolobus solfataricus).